A 418-amino-acid polypeptide reads, in one-letter code: Glutamyl-tRNA reductase (418 aa).

Substrate contacts are provided by residues 49-52 (TCNR), serine 109, 114-116 (EPQ), and glutamine 120. The active-site Nucleophile is the cysteine 50. 189–194 (GAGETI) serves as a coordination point for NADP(+).

The protein belongs to the glutamyl-tRNA reductase family. Homodimer.

It carries out the reaction (S)-4-amino-5-oxopentanoate + tRNA(Glu) + NADP(+) = L-glutamyl-tRNA(Glu) + NADPH + H(+). It functions in the pathway porphyrin-containing compound metabolism; protoporphyrin-IX biosynthesis; 5-aminolevulinate from L-glutamyl-tRNA(Glu): step 1/2. Its function is as follows. Catalyzes the NADPH-dependent reduction of glutamyl-tRNA(Glu) to glutamate 1-semialdehyde (GSA). The chain is Glutamyl-tRNA reductase from Shigella dysenteriae serotype 1 (strain Sd197).